Consider the following 429-residue polypeptide: Mannose-6-phosphate isomerase (429 aa).

N-acetylserine is present on S2. S107 is subject to Phosphoserine. Q109, H111, E136, and H281 together coordinate Zn(2+). Residue R300 is part of the active site.

The protein belongs to the mannose-6-phosphate isomerase type 1 family. As to quaternary structure, monomer. Requires Zn(2+) as cofactor.

The protein localises to the cytoplasm. The enzyme catalyses D-mannose 6-phosphate = D-fructose 6-phosphate. It functions in the pathway nucleotide-sugar biosynthesis; GDP-alpha-D-mannose biosynthesis; alpha-D-mannose 1-phosphate from D-fructose 6-phosphate: step 1/2. Its activity is regulated as follows. Can be inhibited by an excess of zinc. Involved in the synthesis of the GDP-mannose and dolichol-phosphate-mannose required for a number of critical mannosyl transfer reactions. This chain is Mannose-6-phosphate isomerase (PMI40), found in Saccharomyces cerevisiae (strain ATCC 204508 / S288c) (Baker's yeast).